Reading from the N-terminus, the 433-residue chain is Enolase (433 aa).

Glutamine 164 contributes to the (2R)-2-phosphoglycerate binding site. Glutamate 206 acts as the Proton donor in catalysis. Aspartate 243, glutamate 289, and aspartate 316 together coordinate Mg(2+). Residues lysine 341, arginine 370, serine 371, and lysine 392 each coordinate (2R)-2-phosphoglycerate. The active-site Proton acceptor is lysine 341.

This sequence belongs to the enolase family. Mg(2+) is required as a cofactor.

It is found in the cytoplasm. Its subcellular location is the secreted. It localises to the cell surface. The enzyme catalyses (2R)-2-phosphoglycerate = phosphoenolpyruvate + H2O. It participates in carbohydrate degradation; glycolysis; pyruvate from D-glyceraldehyde 3-phosphate: step 4/5. In terms of biological role, catalyzes the reversible conversion of 2-phosphoglycerate (2-PG) into phosphoenolpyruvate (PEP). It is essential for the degradation of carbohydrates via glycolysis. This Borreliella afzelii (strain PKo) (Borrelia afzelii) protein is Enolase.